The sequence spans 832 residues: Subtilisin-like protease SBT2.4 (832 aa).

The N-terminal stretch at 1 to 27 (METNPRKLRSYSYICLIVCIFVLVVCA) is a signal peptide. Residues 74–138 (EAKKIEEIHD…VEEDKGVKLM (65 aa)) form the Inhibitor I9 domain. In terms of domain architecture, Peptidase S8 spans 150–690 (QQVWQKISNE…AGHVNPARAL (541 aa)). The active-site Charge relay system is Asp174. Residues Asn196 and Asn238 are each glycosylated (N-linked (GlcNAc...) asparagine). Catalysis depends on His252, which acts as the Charge relay system. The PA domain maps to 425–524 (TNGSVLQPLT…SAAQIILRYY (100 aa)). Asn426 carries N-linked (GlcNAc...) asparagine glycosylation. The active-site Charge relay system is the Ser618. Residues Asn761, Asn774, and Asn800 are each glycosylated (N-linked (GlcNAc...) asparagine).

It belongs to the peptidase S8 family.

The protein localises to the secreted. In terms of biological role, serine protease required for epidermal surface formation in embryos and juvenile plants. Involved in embryonic cuticle formation downstream of BHLH95/ZOU. The chain is Subtilisin-like protease SBT2.4 from Arabidopsis thaliana (Mouse-ear cress).